We begin with the raw amino-acid sequence, 252 residues long: Trypsin iota (252 aa).

Positions 1-19 (MAVYGIVATVLVLLLLGDA) are cleaved as a signal peptide. A propeptide spans 20–27 (SDVEATGR) (activation peptide). The Peptidase S1 domain occupies 28-250 (IIGGSDQLIR…LRPWIVKAAN (223 aa)). A disulfide bond links C53 and C69. Residues H68 and D113 each act as charge relay system in the active site. Intrachain disulfides connect C175-C193 and C202-C226. Catalysis depends on S206, which acts as the Charge relay system.

The protein belongs to the peptidase S1 family.

Its subcellular location is the secreted. The protein localises to the extracellular space. The catalysed reaction is Preferential cleavage: Arg-|-Xaa, Lys-|-Xaa.. This Drosophila melanogaster (Fruit fly) protein is Trypsin iota (iotaTry).